The sequence spans 648 residues: MNANPKFLSADARVDAAAVAPLPNSRKVYVTGSQPDIRVPMREITQADTPTSFGGEKNPPIYVYDTSGPYTDPDAKIDIRAGLPALRQRWIDARGDTETLAGLTSEYGRERAADPATAELRFPDLHRHPRRAKAGRNVTQMHYARQGIITPEMEFIAIRENQRRAEYLESLKASGPNGAKLAAMMGRQHAGQAFGAAAFGANEAGTNMLTEITPEFVRSEVACGRAIIPANINHPETEPMIIGRNFLVKINANIGNSAVTSSIGEEVDKMTWAIRWGGDTVMDLSTGKHIHETREWIIRNSPVPIGTVPIYQALEKVNGKAEDLTWEIFRDTLIEQAEQGVDYFTIHAGVRLQYVPLTANRMTGIVSRGGSIMAKWCLAHHKESFLYEHFEEICEIMKAYDVSFSLGDGLRPGSIYDANDEAQLGELKTLGELTQIAWKHDVQVMIEGPGHVPMQLIKENMDLQLDWCKEAPFYTLGPLTTDIAPGYDHITSGIGAAMIGWFGTAMLCYVTPKEHLGLPNKDDVKEGIITYKLAAHAADLAKGHPGAQVRDNALSKARFEFRWEDQFNLGLDPDKAREFHDETLPKDSAKVAHFCSMCGPHFCSMKITQDVREFAAQQGMSEDDALKKGMEVKAVEFVKTGSEIYHRQ.

Substrate contacts are provided by residues Asn253, Met282, Tyr311, His347, 367-369 (SRG), 408-411 (DGLR), and Glu447. His451 lines the Zn(2+) pocket. Tyr474 serves as a coordination point for substrate. His515 lines the Zn(2+) pocket. The [4Fe-4S] cluster site is built by Cys595, Cys598, and Cys603.

The protein belongs to the ThiC family. As to quaternary structure, homodimer. The cofactor is [4Fe-4S] cluster.

It carries out the reaction 5-amino-1-(5-phospho-beta-D-ribosyl)imidazole + S-adenosyl-L-methionine = 4-amino-2-methyl-5-(phosphooxymethyl)pyrimidine + CO + 5'-deoxyadenosine + formate + L-methionine + 3 H(+). The protein operates within cofactor biosynthesis; thiamine diphosphate biosynthesis. Catalyzes the synthesis of the hydroxymethylpyrimidine phosphate (HMP-P) moiety of thiamine from aminoimidazole ribotide (AIR) in a radical S-adenosyl-L-methionine (SAM)-dependent reaction. The sequence is that of Phosphomethylpyrimidine synthase from Burkholderia thailandensis (strain ATCC 700388 / DSM 13276 / CCUG 48851 / CIP 106301 / E264).